A 680-amino-acid chain; its full sequence is Probable oxidoreductase YoaE (680 aa).

Residues 9–66 form the 4Fe-4S Mo/W bis-MGD-type domain; that stretch reads NGIFKSVCSLDCPDQCGLLIHKKDGKIVKVQGDPDHPVTAGNICNKVRNMTERIYDEK. [4Fe-4S] cluster contacts are provided by C16, C20, C24, and C52.

It belongs to the prokaryotic molybdopterin-containing oxidoreductase family. The cofactor is Mo-bis(molybdopterin guanine dinucleotide).

The sequence is that of Probable oxidoreductase YoaE (yoaE) from Bacillus subtilis (strain 168).